A 204-amino-acid chain; its full sequence is Methylthioribulose-1-phosphate dehydratase (204 aa).

Zn(2+) contacts are provided by histidine 94 and histidine 96.

This sequence belongs to the aldolase class II family. MtnB subfamily. Requires Zn(2+) as cofactor.

The enzyme catalyses 5-(methylsulfanyl)-D-ribulose 1-phosphate = 5-methylsulfanyl-2,3-dioxopentyl phosphate + H2O. It participates in amino-acid biosynthesis; L-methionine biosynthesis via salvage pathway; L-methionine from S-methyl-5-thio-alpha-D-ribose 1-phosphate: step 2/6. In terms of biological role, catalyzes the dehydration of methylthioribulose-1-phosphate (MTRu-1-P) into 2,3-diketo-5-methylthiopentyl-1-phosphate (DK-MTP-1-P). The polypeptide is Methylthioribulose-1-phosphate dehydratase (Pseudomonas savastanoi pv. phaseolicola (strain 1448A / Race 6) (Pseudomonas syringae pv. phaseolicola (strain 1448A / Race 6))).